The primary structure comprises 254 residues: Protein N-terminal and lysine N-methyltransferase EFM7 (254 aa).

S-adenosyl-L-methionine contacts are provided by residues tryptophan 57, glycine 84–alanine 86, aspartate 106, tryptophan 138, and serine 165.

The protein belongs to the class I-like SAM-binding methyltransferase superfamily. EFM7 family.

The protein localises to the cytoplasm. Its function is as follows. S-adenosyl-L-methionine-dependent protein methyltransferase that trimethylates the N-terminal glycine 'Gly-2' of elongation factor 1-alpha, before also catalyzing the mono- and dimethylation of 'Lys-3'. In Debaryomyces hansenii (strain ATCC 36239 / CBS 767 / BCRC 21394 / JCM 1990 / NBRC 0083 / IGC 2968) (Yeast), this protein is Protein N-terminal and lysine N-methyltransferase EFM7.